A 193-amino-acid polypeptide reads, in one-letter code: NAD(P)H-quinone oxidoreductase subunit I (193 aa).

4Fe-4S ferredoxin-type domains follow at residues 56-85 and 96-125; these read GRIH…VDWE and KHYS…MTEE. Residues Cys65, Cys68, Cys71, Cys75, Cys105, Cys108, Cys111, and Cys115 each contribute to the [4Fe-4S] cluster site. The disordered stretch occupies residues 174 to 193; sequence NLPKGSQRAGQHPEDLVKAE. Over residues 184–193 the composition is skewed to basic and acidic residues; it reads QHPEDLVKAE.

This sequence belongs to the complex I 23 kDa subunit family. As to quaternary structure, NDH-1 is composed of at least 11 different subunits. The cofactor is [4Fe-4S] cluster.

Its subcellular location is the cellular thylakoid membrane. It carries out the reaction a plastoquinone + NADH + (n+1) H(+)(in) = a plastoquinol + NAD(+) + n H(+)(out). The catalysed reaction is a plastoquinone + NADPH + (n+1) H(+)(in) = a plastoquinol + NADP(+) + n H(+)(out). Functionally, NDH-1 shuttles electrons from an unknown electron donor, via FMN and iron-sulfur (Fe-S) centers, to quinones in the respiratory and/or the photosynthetic chain. The immediate electron acceptor for the enzyme in this species is believed to be plastoquinone. Couples the redox reaction to proton translocation, and thus conserves the redox energy in a proton gradient. In Synechocystis sp. (strain ATCC 27184 / PCC 6803 / Kazusa), this protein is NAD(P)H-quinone oxidoreductase subunit I.